Reading from the N-terminus, the 588-residue chain is Putative ABC transporter ATP-binding protein PAM_020 (588 aa).

ABC transporter domains lie at 6–247 and 317–551; these read IIFK…GIQE and LQLQ…TSLN. ATP is bound by residues 40-47 and 351-358; these read GKNGSGKS.

Belongs to the ABC transporter superfamily.

It localises to the cell membrane. In terms of biological role, probably part of an ABC transporter complex. Responsible for energy coupling to the transport system. The polypeptide is Putative ABC transporter ATP-binding protein PAM_020 (Onion yellows phytoplasma (strain OY-M)).